The chain runs to 552 residues: Hydroxylamine reductase (552 aa).

4 residues coordinate [2Fe-2S] cluster: Cys5, Cys8, Cys20, and Cys27. Hybrid [4Fe-2O-2S] cluster-binding residues include His251, Glu275, Cys319, Cys407, Cys435, Cys460, Glu494, and Lys496. Cys407 is modified (cysteine persulfide).

Belongs to the HCP family. [2Fe-2S] cluster serves as cofactor. It depends on hybrid [4Fe-2O-2S] cluster as a cofactor.

It is found in the cytoplasm. The enzyme catalyses A + NH4(+) + H2O = hydroxylamine + AH2 + H(+). Catalyzes the reduction of hydroxylamine to form NH(3) and H(2)O. The chain is Hydroxylamine reductase from Shigella boydii serotype 4 (strain Sb227).